A 266-amino-acid chain; its full sequence is Glucosamine-6-phosphate deaminase (266 aa).

Residue D72 is the Proton acceptor; for enolization step of the active site. D141 serves as the catalytic For ring-opening step. H143 acts as the Proton acceptor; for ring-opening step in catalysis. E148 acts as the For ring-opening step in catalysis.

This sequence belongs to the glucosamine/galactosamine-6-phosphate isomerase family. NagB subfamily. Homohexamer.

The enzyme catalyses alpha-D-glucosamine 6-phosphate + H2O = beta-D-fructose 6-phosphate + NH4(+). Its pathway is amino-sugar metabolism; N-acetylneuraminate degradation; D-fructose 6-phosphate from N-acetylneuraminate: step 5/5. Allosterically activated by N-acetylglucosamine 6-phosphate (GlcNAc6P). Its function is as follows. Catalyzes the reversible isomerization-deamination of glucosamine 6-phosphate (GlcN6P) to form fructose 6-phosphate (Fru6P) and ammonium ion. The chain is Glucosamine-6-phosphate deaminase from Aeromonas salmonicida (strain A449).